The sequence spans 290 residues: NAD kinase (290 aa).

Aspartate 72 acts as the Proton acceptor in catalysis. Residues 72–73, 146–147, arginine 174, aspartate 176, and 187–192 contribute to the NAD(+) site; these read DG, NE, and TAYALS.

Belongs to the NAD kinase family. A divalent metal cation serves as cofactor.

It is found in the cytoplasm. The enzyme catalyses NAD(+) + ATP = ADP + NADP(+) + H(+). Functionally, involved in the regulation of the intracellular balance of NAD and NADP, and is a key enzyme in the biosynthesis of NADP. Catalyzes specifically the phosphorylation on 2'-hydroxyl of the adenosine moiety of NAD to yield NADP. This is NAD kinase from Methylococcus capsulatus (strain ATCC 33009 / NCIMB 11132 / Bath).